The primary structure comprises 141 residues: Hemoglobin subunit alpha (141 aa).

The region spanning 1 to 141 (VLSPADKTNI…VSTVLTSKYR (141 aa)) is the Globin domain. Ser3 is subject to Phosphoserine. N6-succinyllysine is present on Lys7. Thr8 carries the phosphothreonine modification. Lys11 is modified (N6-succinyllysine). Lys16 carries the N6-acetyllysine; alternate modification. Lys16 is modified (N6-succinyllysine; alternate). Tyr24 is subject to Phosphotyrosine. Phosphoserine is present on Ser35. An N6-succinyllysine modification is found at Lys40. Phosphoserine is present on Ser49. O2 is bound at residue His58. His87 lines the heme b pocket. Position 102 is a phosphoserine (Ser102). Thr108 carries the post-translational modification Phosphothreonine. Ser124 carries the phosphoserine modification. Thr134 and Thr137 each carry phosphothreonine. At Ser138 the chain carries Phosphoserine.

Belongs to the globin family. As to quaternary structure, heterotetramer of two alpha chains and two beta chains. In terms of tissue distribution, red blood cells.

Its function is as follows. Involved in oxygen transport from the lung to the various peripheral tissues. Functionally, hemopressin acts as an antagonist peptide of the cannabinoid receptor CNR1. Hemopressin-binding efficiently blocks cannabinoid receptor CNR1 and subsequent signaling. The protein is Hemoglobin subunit alpha (HBA) of Chrysocyon brachyurus (Maned wolf).